Reading from the N-terminus, the 268-residue chain is Tryptophan synthase alpha chain (268 aa).

Active-site proton acceptor residues include Glu-49 and Asp-60.

The protein belongs to the TrpA family. As to quaternary structure, tetramer of two alpha and two beta chains.

It carries out the reaction (1S,2R)-1-C-(indol-3-yl)glycerol 3-phosphate + L-serine = D-glyceraldehyde 3-phosphate + L-tryptophan + H2O. It participates in amino-acid biosynthesis; L-tryptophan biosynthesis; L-tryptophan from chorismate: step 5/5. In terms of biological role, the alpha subunit is responsible for the aldol cleavage of indoleglycerol phosphate to indole and glyceraldehyde 3-phosphate. The chain is Tryptophan synthase alpha chain from Yersinia pseudotuberculosis serotype O:3 (strain YPIII).